A 437-amino-acid chain; its full sequence is Histidine--tRNA ligase (437 aa).

This sequence belongs to the class-II aminoacyl-tRNA synthetase family. As to quaternary structure, homodimer.

The protein localises to the cytoplasm. The catalysed reaction is tRNA(His) + L-histidine + ATP = L-histidyl-tRNA(His) + AMP + diphosphate + H(+). This Leptospira biflexa serovar Patoc (strain Patoc 1 / Ames) protein is Histidine--tRNA ligase.